A 187-amino-acid polypeptide reads, in one-letter code: Troponin I, slow skeletal muscle (187 aa).

Pro2 carries the post-translational modification N-acetylproline. An involved in binding TNC region spans residues 2–48 (PEVERKSKITASRKLMLKSLMLAKAKECWEQEHEEREAEKVRYLSER). Ser58 carries the phosphoserine modification. Residues 97–118 (LKLKVLDLRGKFKRPPLRRVRV) are involved in binding TNC and actin.

The protein belongs to the troponin I family. As to quaternary structure, binds to actin and tropomyosin.

Troponin I is the inhibitory subunit of troponin, the thin filament regulatory complex which confers calcium-sensitivity to striated muscle actomyosin ATPase activity. The sequence is that of Troponin I, slow skeletal muscle (Tnni1) from Mus musculus (Mouse).